We begin with the raw amino-acid sequence, 335 residues long: Beta-ketoacyl-[acyl-carrier-protein] synthase III (335 aa).

Catalysis depends on residues Cys-116 and His-256. Residues 257–261 form an ACP-binding region; it reads QANLR. Asn-286 is a catalytic residue.

Belongs to the thiolase-like superfamily. FabH family. Homodimer.

Its subcellular location is the cytoplasm. The enzyme catalyses malonyl-[ACP] + acetyl-CoA + H(+) = 3-oxobutanoyl-[ACP] + CO2 + CoA. It functions in the pathway lipid metabolism; fatty acid biosynthesis. Catalyzes the condensation reaction of fatty acid synthesis by the addition to an acyl acceptor of two carbons from malonyl-ACP. Catalyzes the first condensation reaction which initiates fatty acid synthesis and may therefore play a role in governing the total rate of fatty acid production. Possesses both acetoacetyl-ACP synthase and acetyl transacylase activities. Its substrate specificity determines the biosynthesis of branched-chain and/or straight-chain of fatty acids. This chain is Beta-ketoacyl-[acyl-carrier-protein] synthase III, found in Porphyromonas gingivalis (strain ATCC BAA-308 / W83).